The chain runs to 549 residues: Polycomb group RING finger protein 3 homolog mig-32 (549 aa).

Positions 1-263 (MTRKRPALAE…EESMRQKYGQ (263 aa)) are disordered. A compositionally biased stretch (low complexity) spans 12-29 (VSSSRSRVTRRSTTGAPS). 2 stretches are compositionally biased toward acidic residues: residues 38–49 (PESDADSEDDYD) and 87–100 (MDDD…DGEV). A compositionally biased stretch (basic residues) spans 118-130 (KTAKLQTKKKKKK). A compositionally biased stretch (pro residues) spans 134–144 (PETPPTSPSPS). The span at 145 to 156 (PSRSVSPSTTKS) shows a compositional bias: low complexity. The span at 205 to 235 (EEIKLRERAERKARRIEEAKNRPKLTIEQKL) shows a compositional bias: basic and acidic residues. Residues 206 to 260 (EIKLRERAERKARRIEEAKNRPKLTIEQKLAKLRKKKERRERRKEQEKEESMRQK) are a coiled coil. The span at 236–247 (AKLRKKKERRER) shows a compositional bias: basic residues. Basic and acidic residues predominate over residues 248–258 (RKEQEKEESMR). The RING-type zinc-finger motif lies at 329 to 368 (CGICDGYIVDATTIIDCMHTFCKSCLLTYFESDNNTCPTC).

As to quaternary structure, component of a PRC1-like complex.

It is found in the nucleus. The protein resides in the nucleolus. Functionally, component of a Polycomb group (PcG) multiprotein PRC1-like complex, a complex class required to maintain the transcriptionally repressive state of many genes, throughout development. Required for ubiquitination of histone H2A. Plays a role in the formation of the male-specific genital sensilla (simple sense organs) known as rays. Required for normal migration of the hermaphrodite specific neurons (HSN) and for extension of some neuronal processes. Represses vulval fates in hypodermal cells that do not normally contribute to vulval development. The chain is Polycomb group RING finger protein 3 homolog mig-32 from Caenorhabditis elegans.